The primary structure comprises 880 residues: Protein transport protein SEC23 A (880 aa).

The segment covering 1-13 (MANLPKSSVNYPG) has biased composition (polar residues). The tract at residues 1–95 (MANLPKSSVN…PPGPPVFNTP (95 aa)) is disordered. A compositionally biased stretch (pro residues) spans 20-36 (PNRPSPQPDRTPVPHSP). The segment covering 57–70 (MSSPSMKSPSLLSP) has biased composition (low complexity). Zn(2+) contacts are provided by Cys-204, Cys-207, Cys-226, and Cys-229. Positions 204-229 (CLNCGAYSNPYSSILIGSGQWQCVIC) are zinc finger-like.

It belongs to the SEC23/SEC24 family. SEC24 subfamily. In terms of assembly, component of the coat protein complex II (COPII), composed of at least five proteins: the Sec23/24 complex, the Sec13/31 complex and Sar1. Mostly expressed in seedlings, roots, cotyledons, leaves, trichomes, leaf primordia and flowers, and, to a lower extent, in mature siliques.

Its subcellular location is the cytoplasmic vesicle. It is found in the COPII-coated vesicle membrane. The protein resides in the endoplasmic reticulum membrane. The protein localises to the membrane. Functionally, component of the coat protein complex II (COPII) which promotes the formation of transport vesicles from the endoplasmic reticulum (ER). The coat has two main functions, the physical deformation of the endoplasmic reticulum membrane into vesicles and the selection of cargo molecules. May contribute to COPII-coated vesicles formation and ER-Golgi vesicle transport. Together with SEC23D, essential for pollen wall development and exine patterning, probably by regulating endoplasmic reticulum (ER) export of lipids and proteins (e.g. sporopollenin) necessary for pollen wall formation. Also involved in plastid physiology in anther tapetal cells. The chain is Protein transport protein SEC23 A from Arabidopsis thaliana (Mouse-ear cress).